The sequence spans 393 residues: Elongation factor Tu (393 aa).

Positions 10–203 (KPHVNIGTIG…AVDSYIPEPV (194 aa)) constitute a tr-type G domain. The G1 stretch occupies residues 19 to 26 (GHVDHGKT). 19 to 26 (GHVDHGKT) lines the GTP pocket. Threonine 26 is a binding site for Mg(2+). The segment at 60-64 (GITIS) is G2. The G3 stretch occupies residues 81–84 (DCPG). GTP is bound by residues 81-85 (DCPGH) and 136-139 (NKVD). Residues 136–139 (NKVD) form a G4 region. The interval 173 to 175 (SAL) is G5.

Belongs to the TRAFAC class translation factor GTPase superfamily. Classic translation factor GTPase family. EF-Tu/EF-1A subfamily. Monomer.

It is found in the cytoplasm. It carries out the reaction GTP + H2O = GDP + phosphate + H(+). Functionally, GTP hydrolase that promotes the GTP-dependent binding of aminoacyl-tRNA to the A-site of ribosomes during protein biosynthesis. This Prosthecochloris aestuarii (strain DSM 271 / SK 413) protein is Elongation factor Tu.